The following is a 520-amino-acid chain: Cytochrome b5 reductase 4 (520 aa).

Methionine 1 bears the N-acetylmethionine mark. The interval 1–27 (MLNVPSQAFPAPGSQQRVASQGRSKVP) is disordered. Polar residues predominate over residues 13–23 (GSQQRVASQGR). The Cytochrome b5 heme-binding domain maps to 54–130 (LIEVTEEELK…LKECLVGRMA (77 aa)). Residues histidine 89 and histidine 112 each coordinate heme. One can recognise a CS domain in the interval 164 to 255 (PSSPSYDWFQ…KETVSWKCLG (92 aa)). The 113-residue stretch at 272 to 384 (LYYRQCQLIS…SGPEGNFKVS (113 aa)) folds into the FAD-binding FR-type domain. Residues 364–379 (DRLQIGDFVSVSGPEG) and 391–423 (DLFLLAAGTGFTPMVTVLNHALTHMSSLRKVKL) contribute to the FAD site.

Belongs to the flavoprotein pyridine nucleotide cytochrome reductase family. Requires FAD as cofactor. As to expression, isoform 2 is expressed in testis, brain, skeletal muscle and in the male germline.

Its subcellular location is the endoplasmic reticulum. The catalysed reaction is 2 Fe(III)-[cytochrome b5] + NADH = 2 Fe(II)-[cytochrome b5] + NAD(+) + H(+). In terms of biological role, NADH-cytochrome b5 reductase involved in endoplasmic reticulum stress response pathway. Plays a critical role in protecting pancreatic beta-cells against oxidant stress, possibly by protecting the cell from excess buildup of reactive oxygen species (ROS). In Rattus norvegicus (Rat), this protein is Cytochrome b5 reductase 4 (Cyb5r4).